A 331-amino-acid chain; its full sequence is Tetraacyldisaccharide 4'-kinase (331 aa).

Residue 55-62 coordinates ATP; the sequence is SVGGNGKT.

Belongs to the LpxK family.

It catalyses the reaction a lipid A disaccharide + ATP = a lipid IVA + ADP + H(+). Its pathway is glycolipid biosynthesis; lipid IV(A) biosynthesis; lipid IV(A) from (3R)-3-hydroxytetradecanoyl-[acyl-carrier-protein] and UDP-N-acetyl-alpha-D-glucosamine: step 6/6. Transfers the gamma-phosphate of ATP to the 4'-position of a tetraacyldisaccharide 1-phosphate intermediate (termed DS-1-P) to form tetraacyldisaccharide 1,4'-bis-phosphate (lipid IVA). The protein is Tetraacyldisaccharide 4'-kinase of Aeromonas salmonicida (strain A449).